Here is a 372-residue protein sequence, read N- to C-terminus: Alanine dehydrogenase 2 (372 aa).

Residue H95 is part of the active site. 169–199 (KVTIIGGGQAGTNAAKIALGLGADVTILDVN) contributes to the NAD(+) binding site.

It belongs to the AlaDH/PNT family.

It catalyses the reaction L-alanine + NAD(+) + H2O = pyruvate + NH4(+) + NADH + H(+). Its pathway is amino-acid degradation; L-alanine degradation via dehydrogenase pathway; NH(3) and pyruvate from L-alanine: step 1/1. Functionally, may play a role in cell wall synthesis as L-alanine is an important constituent of the peptidoglycan layer. The sequence is that of Alanine dehydrogenase 2 (ald2) from Staphylococcus aureus (strain MRSA252).